Reading from the N-terminus, the 124-residue chain is Small ribosomal subunit protein uS12 (124 aa).

3-methylthioaspartic acid is present on Asp-90.

The protein belongs to the universal ribosomal protein uS12 family. In terms of assembly, part of the 30S ribosomal subunit. Contacts proteins S8 and S17. May interact with IF1 in the 30S initiation complex.

Functionally, with S4 and S5 plays an important role in translational accuracy. In terms of biological role, interacts with and stabilizes bases of the 16S rRNA that are involved in tRNA selection in the A site and with the mRNA backbone. Located at the interface of the 30S and 50S subunits, it traverses the body of the 30S subunit contacting proteins on the other side and probably holding the rRNA structure together. The combined cluster of proteins S8, S12 and S17 appears to hold together the shoulder and platform of the 30S subunit. This is Small ribosomal subunit protein uS12 from Wolbachia sp. subsp. Brugia malayi (strain TRS).